The following is a 399-amino-acid chain: Digeranylgeranylglycerophospholipid reductase (399 aa).

Positions 15, 34, 45, 46, 48, 99, 123, 280, 292, and 293 each coordinate FAD.

It belongs to the geranylgeranyl reductase family. DGGGPL reductase subfamily. The cofactor is FAD.

The catalysed reaction is a 2,3-bis-O-phytanyl-sn-glycerol 1-phospholipid + 8 oxidized 2[4Fe-4S]-[ferredoxin] = a 2,3-bis-O-(geranylgeranyl)-sn-glycerol 1-phospholipid + 8 reduced 2[4Fe-4S]-[ferredoxin] + 16 H(+). It catalyses the reaction 2,3-bis-O-(phytanyl)-sn-glycerol 1-phosphate + 8 oxidized 2[4Fe-4S]-[ferredoxin] = 2,3-bis-O-(geranylgeranyl)-sn-glycerol 1-phosphate + 8 reduced 2[4Fe-4S]-[ferredoxin] + 16 H(+). The enzyme catalyses a 2,3-bis-O-phytanyl-sn-glycerol 1-phospholipid + 8 A = a 2,3-bis-O-(geranylgeranyl)-sn-glycerol 1-phospholipid + 8 AH2. It carries out the reaction CDP-2,3-bis-O-(geranylgeranyl)-sn-glycerol + 8 AH2 = CDP-2,3-bis-O-(phytanyl)-sn-glycerol + 8 A. The catalysed reaction is archaetidylserine + 8 AH2 = 2,3-bis-O-phytanyl-sn-glycero-3-phospho-L-serine + 8 A. The protein operates within membrane lipid metabolism; glycerophospholipid metabolism. Functionally, is involved in the reduction of 2,3-digeranylgeranylglycerophospholipids (unsaturated archaeols) into 2,3-diphytanylglycerophospholipids (saturated archaeols) in the biosynthesis of archaeal membrane lipids. Catalyzes the formation of archaetidic acid (2,3-di-O-phytanyl-sn-glyceryl phosphate) from 2,3-di-O-geranylgeranylglyceryl phosphate (DGGGP) via the hydrogenation of each double bond of the isoprenoid chains. Is also probably able to reduce double bonds of geranyl groups in CDP-2,3-bis-O-(geranylgeranyl)-sn-glycerol and archaetidylserine, thus acting at various stages in the biosynthesis of archaeal membrane lipids. The protein is Digeranylgeranylglycerophospholipid reductase of Methanosphaerula palustris (strain ATCC BAA-1556 / DSM 19958 / E1-9c).